The primary structure comprises 549 residues: Glucose-6-phosphate isomerase (549 aa).

The active-site Proton donor is Glu353. Catalysis depends on residues His384 and Lys513.

Belongs to the GPI family.

Its subcellular location is the cytoplasm. It catalyses the reaction alpha-D-glucose 6-phosphate = beta-D-fructose 6-phosphate. It participates in carbohydrate biosynthesis; gluconeogenesis. It functions in the pathway carbohydrate degradation; glycolysis; D-glyceraldehyde 3-phosphate and glycerone phosphate from D-glucose: step 2/4. Catalyzes the reversible isomerization of glucose-6-phosphate to fructose-6-phosphate. The polypeptide is Glucose-6-phosphate isomerase (Bartonella bacilliformis (strain ATCC 35685 / KC583 / Herrer 020/F12,63)).